The sequence spans 547 residues: Probable ATP-dependent RNA helicase DDX56 (547 aa).

Residues Leu-7–Glu-35 carry the Q motif motif. The region spanning Ile-38–Leu-218 is the Helicase ATP-binding domain. Ala-51–Thr-58 is an ATP binding site. Position 126 is a phosphoserine (Ser-126). The residue at position 141 (Thr-141) is a Phosphothreonine. Residues Asp-166 to Asp-169 carry the DEAD box motif. Residues Gln-230–Glu-424 form the Helicase C-terminal domain. Basic residues-rich tracts occupy residues Arg-506–Lys-525 and Ser-532–Ser-547. The segment at Arg-506–Ser-547 is disordered. At Ser-532 the chain carries Phosphoserine.

Belongs to the DEAD box helicase family. DDX56/DBP9 subfamily. In terms of assembly, may form homooligomeric complexes. Interacts with IRF3. Interacts with OCT4 and POU5F1. As to quaternary structure, (Microbial infection) Interacts with West Nile virus capsid protein C. (Microbial infection) Interacts with foot-and-mouth disease virus protein 3A; this interaction leads to inhibition of type I interferon production. In terms of assembly, (Microbial infection) Interacts with EMCV protein 3C; this interaction leads to inhibition of type I interferon production. In terms of tissue distribution, detected in heart, brain, liver, pancreas, placenta and lung.

The protein resides in the nucleus. Its subcellular location is the nucleolus. The enzyme catalyses ATP + H2O = ADP + phosphate + H(+). Functionally, nucleolar RNA helicase that plays a role in various biological processes including innate immunity, ribosome biogenesis or nucleolus organization. Plays an essential role in maintaining nucleolar integrity in planarian stem cells. Maintains embryonic stem cells proliferation by conventional regulation of ribosome assembly and interaction with OCT4 and POU5F1 complex. Regulates antiviral innate immunity by inhibiting the virus-triggered signaling nuclear translocation of IRF3. Mechanistically, acts by disrupting the interaction between IRF3 and importin IPO5. May play a role in later stages of the processing of the pre-ribosomal particles leading to mature 60S ribosomal subunits. Has intrinsic ATPase activity. In terms of biological role, (Microbial infection) Helicase activity is important for packaging viral RNA into virions during West Nile virus infection. Its function is as follows. (Microbial infection) Plays a positive role in foot-and-mouth disease virus replication by inhibiting the phosphorylation of IRF3 leading to inhibition of type I interferon. (Microbial infection) Plays a positive role in EMCV replication by interrupting IRF3 phosphorylation and its nucleus translocation. The polypeptide is Probable ATP-dependent RNA helicase DDX56 (DDX56) (Homo sapiens (Human)).